Here is a 397-residue protein sequence, read N- to C-terminus: Alpha-lytic protease (397 aa).

An N-terminal signal peptide occupies residues 1-24; the sequence is MYVSNHRSRRVARVSVSCLVAALA. A propeptide spanning residues 25–199 is cleaved from the precursor; that stretch reads AMSCGAALAA…ESSPGKLQTT (175 aa). The cysteines at positions 216 and 236 are disulfide-linked. Catalysis depends on charge relay system residues His-235 and Asp-262. 2 disulfide bridges follow: Cys-300/Cys-310 and Cys-336/Cys-369. Catalysis depends on Ser-342, which acts as the Charge relay system.

It belongs to the peptidase S1 family.

It catalyses the reaction Preferential cleavage: Ala-|-Xaa, Val-|-Xaa in bacterial cell walls, elastin and other proteins.. This chain is Alpha-lytic protease (alpha-LP), found in Lysobacter enzymogenes.